The primary structure comprises 208 residues: Ribonuclease HII (208 aa).

Residues Gly-18–Cys-208 enclose the RNase H type-2 domain. Positions 24, 25, and 116 each coordinate a divalent metal cation.

It belongs to the RNase HII family. Requires Mn(2+) as cofactor. Mg(2+) is required as a cofactor.

Its subcellular location is the cytoplasm. It catalyses the reaction Endonucleolytic cleavage to 5'-phosphomonoester.. Its function is as follows. Endonuclease that specifically degrades the RNA of RNA-DNA hybrids. The chain is Ribonuclease HII from Shewanella loihica (strain ATCC BAA-1088 / PV-4).